The following is a 151-amino-acid chain: UPF0208 membrane protein YfbV (151 aa).

2 consecutive transmembrane segments (helical) span residues 46-65 (YAIRFMPPIAVFTLCWQIAL) and 69-91 (LGPAVATALFALSLPMQGLWWLG).

Belongs to the UPF0208 family.

It is found in the cell inner membrane. This is UPF0208 membrane protein YfbV from Shigella flexneri serotype 5b (strain 8401).